A 148-amino-acid polypeptide reads, in one-letter code: 3-hydroxyacyl-[acyl-carrier-protein] dehydratase FabZ (148 aa).

Residue His-48 is part of the active site.

It belongs to the thioester dehydratase family. FabZ subfamily.

It is found in the cytoplasm. It catalyses the reaction a (3R)-hydroxyacyl-[ACP] = a (2E)-enoyl-[ACP] + H2O. Involved in unsaturated fatty acids biosynthesis. Catalyzes the dehydration of short chain beta-hydroxyacyl-ACPs and long chain saturated and unsaturated beta-hydroxyacyl-ACPs. The sequence is that of 3-hydroxyacyl-[acyl-carrier-protein] dehydratase FabZ from Campylobacter fetus subsp. fetus (strain 82-40).